Consider the following 956-residue polypeptide: Thrombospondin-3 (956 aa).

An N-terminal signal peptide occupies residues 1-22 (METQELRGALALLLLCFFTSAS). Positions 23 to 193 (QDLQVIDLLT…VESMKIILGG (171 aa)) constitute a Laminin G-like domain. Intrachain disulfides connect cysteine 278–cysteine 289, cysteine 283–cysteine 300, cysteine 303–cysteine 314, cysteine 320–cysteine 332, cysteine 326–cysteine 341, cysteine 344–cysteine 368, cysteine 374–cysteine 388, cysteine 382–cysteine 397, cysteine 400–cysteine 412, cysteine 418–cysteine 432, cysteine 426–cysteine 442, cysteine 444–cysteine 455, cysteine 471–cysteine 478, cysteine 483–cysteine 503, cysteine 519–cysteine 539, cysteine 542–cysteine 562, cysteine 578–cysteine 598, cysteine 601–cysteine 621, cysteine 639–cysteine 659, cysteine 679–cysteine 699, and cysteine 715–cysteine 936. A glycan (N-linked (GlcNAc...) asparagine) is linked at asparagine 310. Residues 316–354 (DINECAHADPCFPGSSCINTMPGFHCEACPRGYKGTQVS) enclose the EGF-like 1; calcium-binding domain. The EGF-like 2; calcium-binding domain occupies 370–410 (DIDECNDGNNGGCDPNSICTNTVGSFKCGPCRLGFLGNQSQ). A glycan (N-linked (GlcNAc...) asparagine) is linked at asparagine 407. The EGF-like 3 domain occupies 414 to 456 (PARTCHSPAHSPCHIHAHCLFERNGAVSCQCNVGWAGNGNVCG). TSP type-3 repeat units follow at residues 457–491 (TDTD…NSGQ), 492–527 (EDAD…NKDQ), 528–550 (QNSD…NNDQ), 551–586 (KDTD…NPLQ), 587–609 (TDRD…NPTQ), 610–647 (TDAD…NSSQ), 648–687 (LDSD…NPNQ), and 688–723 (KDSD…EVTL). 2 disordered regions span residues 518-537 (NCRL…SFGD) and 546-702 (PNND…CEDD). The segment covering 555–568 (GNGEGDACDNDVDG) has biased composition (acidic residues). The span at 612–628 (ADSDLVGDVCDTNEDSD) shows a compositional bias: acidic residues. N-linked (GlcNAc...) asparagine glycosylation is present at asparagine 644. Positions 650 to 667 (SDNDGLGDECDGDDDNDG) are enriched in acidic residues. Positions 727–941 (RAYQTVVLDP…LQYRCNDTVP (215 aa)) constitute a TSP C-terminal domain. A glycan (N-linked (GlcNAc...) asparagine) is linked at asparagine 937.

The protein belongs to the thrombospondin family. As to quaternary structure, oligomer; disulfide-linked.

Adhesive glycoprotein that mediates cell-to-cell and cell-to-matrix interactions. Can bind to fibrinogen, fibronectin, laminin and type V collagen. This Homo sapiens (Human) protein is Thrombospondin-3 (THBS3).